We begin with the raw amino-acid sequence, 264 residues long: Triosephosphate isomerase (264 aa).

12–14 lines the substrate pocket; the sequence is NWK. His104 acts as the Electrophile in catalysis. The active-site Proton acceptor is Glu176. Substrate contacts are provided by residues Gly182, Ser222, and 243–244; that span reads GG.

It belongs to the triosephosphate isomerase family. As to quaternary structure, homodimer.

The protein resides in the cytoplasm. It carries out the reaction D-glyceraldehyde 3-phosphate = dihydroxyacetone phosphate. Its pathway is carbohydrate biosynthesis; gluconeogenesis. It functions in the pathway carbohydrate degradation; glycolysis; D-glyceraldehyde 3-phosphate from glycerone phosphate: step 1/1. Involved in the gluconeogenesis. Catalyzes stereospecifically the conversion of dihydroxyacetone phosphate (DHAP) to D-glyceraldehyde-3-phosphate (G3P). The protein is Triosephosphate isomerase of Bifidobacterium adolescentis (strain ATCC 15703 / DSM 20083 / NCTC 11814 / E194a).